Here is a 204-residue protein sequence, read N- to C-terminus: Ribosomal RNA small subunit methyltransferase J (204 aa).

S-adenosyl-L-methionine contacts are provided by residues 55-56 (RD), 71-72 (ER), and Asp123.

Belongs to the methyltransferase superfamily. RsmJ family.

The protein resides in the cytoplasm. It carries out the reaction guanosine(1516) in 16S rRNA + S-adenosyl-L-methionine = N(2)-methylguanosine(1516) in 16S rRNA + S-adenosyl-L-homocysteine + H(+). Functionally, specifically methylates the guanosine in position 1516 of 16S rRNA. The polypeptide is Ribosomal RNA small subunit methyltransferase J (Rhodopseudomonas palustris (strain ATCC BAA-98 / CGA009)).